The following is a 345-amino-acid chain: N-acetyl-gamma-glutamyl-phosphate reductase (345 aa).

The active site involves Cys149.

It belongs to the NAGSA dehydrogenase family. Type 1 subfamily.

The protein resides in the cytoplasm. The enzyme catalyses N-acetyl-L-glutamate 5-semialdehyde + phosphate + NADP(+) = N-acetyl-L-glutamyl 5-phosphate + NADPH + H(+). The protein operates within amino-acid biosynthesis; L-arginine biosynthesis; N(2)-acetyl-L-ornithine from L-glutamate: step 3/4. Catalyzes the NADPH-dependent reduction of N-acetyl-5-glutamyl phosphate to yield N-acetyl-L-glutamate 5-semialdehyde. The protein is N-acetyl-gamma-glutamyl-phosphate reductase of Bacillus thuringiensis subsp. konkukian (strain 97-27).